The following is a 388-amino-acid chain: uncharacterized protein (388 aa).

This sequence belongs to the glycosyltransferase 28 family.

This is an uncharacterized protein from Methanosarcina acetivorans (strain ATCC 35395 / DSM 2834 / JCM 12185 / C2A).